A 142-amino-acid polypeptide reads, in one-letter code: Large ribosomal subunit protein uL11 (142 aa).

It belongs to the universal ribosomal protein uL11 family. Part of the ribosomal stalk of the 50S ribosomal subunit. Interacts with L10 and the large rRNA to form the base of the stalk. L10 forms an elongated spine to which L12 dimers bind in a sequential fashion forming a multimeric L10(L12)X complex. One or more lysine residues are methylated.

In terms of biological role, forms part of the ribosomal stalk which helps the ribosome interact with GTP-bound translation factors. This chain is Large ribosomal subunit protein uL11, found in Nitrobacter hamburgensis (strain DSM 10229 / NCIMB 13809 / X14).